A 615-amino-acid polypeptide reads, in one-letter code: Medium-chain acyl-CoA ligase ACSF2, mitochondrial (615 aa).

The transit peptide at 1–49 (MAVYLGMLRLGRLCVASLGARGPRTPLSRPWPNSKLQGVRAFSSGMVDC) directs the protein to the mitochondrion. N6-acetyllysine is present on K179. The residue at position 182 (K182) is an N6-acetyllysine; alternate. K182 is subject to N6-succinyllysine; alternate. K199 is modified (N6-acetyllysine). Position 263–271 (263–271 (TSGTTGNPK)) interacts with ATP. 2 positions are modified to N6-acetyllysine: K340 and K398. Residue K478 is modified to N6-succinyllysine. Residues D493 and R508 each coordinate ATP. K510 is modified (N6-acetyllysine). 2 positions are modified to N6-acetyllysine; alternate: K544 and K570. 2 positions are modified to N6-succinyllysine; alternate: K544 and K570. K599 provides a ligand contact to ATP. K599 is subject to N6-succinyllysine.

Belongs to the ATP-dependent AMP-binding enzyme family.

It is found in the mitochondrion. The catalysed reaction is a medium-chain fatty acid + ATP + CoA = a medium-chain fatty acyl-CoA + AMP + diphosphate. The enzyme catalyses octanoate + ATP + CoA = octanoyl-CoA + AMP + diphosphate. In terms of biological role, acyl-CoA synthases catalyze the initial reaction in fatty acid metabolism, by forming a thioester with CoA. Has some preference toward medium-chain substrates. Plays a role in adipocyte differentiation. The sequence is that of Medium-chain acyl-CoA ligase ACSF2, mitochondrial from Rattus norvegicus (Rat).